Consider the following 150-residue polypeptide: MIP18 family protein FAM96A (150 aa).

The protein belongs to the MIP18 family.

May play a role in chromosome segregation through establishment of sister chromatid cohesion. The polypeptide is MIP18 family protein FAM96A (fam96A) (Dictyostelium discoideum (Social amoeba)).